The primary structure comprises 604 residues: Baculoviral IAP repeat-containing protein 3 (604 aa).

The stretch at 29–96 is one BIR 1 repeat; that stretch reads ELYRMSTYST…RNLYPSCSFI (68 aa). R130 bears the Omega-N-methylarginine mark. The residue at position 140 (S140) is a Phosphoserine. 2 BIR repeats span residues 169–235 and 255–322; these read EEDR…CPFV and LAAR…CEYL. 4 residues coordinate Zn(2+): C292, C295, H312, and C319. The 91-residue stretch at 439-529 folds into the CARD domain; that stretch reads RESDDVSLIR…MLYKRFFVQQ (91 aa). An RING-type zinc finger spans residues 557–592; the sequence is CKVCMDKEVSIVFIPCGHLVVCRDCAPSLRKCPICR.

This sequence belongs to the IAP family. In terms of assembly, interacts with PRSS25; the interaction inhibits apoptotic suppressor activity. The BIR motifs region interacts with TNF receptor associated factors 1 and 2 (TRAF1 and TRAF2) to form a heteromeric complex, which is then recruited to the tumor necrosis factor receptor 2 (TNFR2). Interaction with TRAF2 is required for ubiquitination of IKBKE, degradation of NFKBIA and activation of NF-kappa-B. Interacts with RIP1, RIP2, RIP3, RIP4 and USP19. Post-translationally, auto-ubiquitinated and degraded by the proteasome in apoptotic cells.

It localises to the cytoplasm. The protein localises to the nucleus. The enzyme catalyses S-ubiquitinyl-[E2 ubiquitin-conjugating enzyme]-L-cysteine + [acceptor protein]-L-lysine = [E2 ubiquitin-conjugating enzyme]-L-cysteine + N(6)-ubiquitinyl-[acceptor protein]-L-lysine.. With respect to regulation, USP19 regulates the stability of BIRC3/c-IAP2 by preventing its ubiquitination. Multi-functional protein which regulates not only caspases and apoptosis, but also modulates inflammatory signaling and immunity, mitogenic kinase signaling and cell proliferation, as well as cell invasion and metastasis. Acts as an E3 ubiquitin-protein ligase regulating NF-kappa-B signaling and regulates both canonical and non-canonical NF-kappa-B signaling by acting in opposite directions: acts as a positive regulator of the canonical pathway and suppresses constitutive activation of non-canonical NF-kappa-B signaling. The target proteins for its E3 ubiquitin-protein ligase activity include: RIPK1, RIPK2, RIPK3, RIPK4, CASP3, CASP7, CASP8, IKBKE, TRAF1, and BCL10. Acts as an important regulator of innate immune signaling via regulation of Toll-like receptors (TLRs), Nodlike receptors (NLRs) and RIG-I like receptors (RLRs), collectively referred to as pattern recognition receptors (PRRs). Protects cells from spontaneous formation of the ripoptosome, a large multi-protein complex that has the capability to kill cancer cells in a caspase-dependent and caspase-independent manner. Suppresses ripoptosome formation by ubiquitinating RIPK1 and CASP8. This chain is Baculoviral IAP repeat-containing protein 3 (BIRC3), found in Canis lupus familiaris (Dog).